The primary structure comprises 82 residues: Progonadoliberin-3 (82 aa).

The signal sequence occupies residues 1-23; that stretch reads MDLSSKTVVQVVMLALIAQVTFS. Gln-24 is subject to Pyrrolidone carboxylic acid. The residue at position 33 (Gly-33) is a Glycine amide.

It belongs to the GnRH family.

It localises to the secreted. Its function is as follows. Stimulates the secretion of gonadotropins. This Oncorhynchus masou (Cherry salmon) protein is Progonadoliberin-3 (gnrh3).